A 196-amino-acid chain; its full sequence is MAQLYFYYSAMNAGKSTALLQSSYNYQERGMRTLVFTAEIDNRFGVGTVSSRIGLSSQAQLYNSGTSLLSIIAAEHQDTPIHCILLDECQFLTKEQVQELCQVVDELHLPVLCYGLRTDFLGELFPGSKYLLAWADKLVELKTICHCGRKANMVLRLDEQGRAVHNGEQVVIGGNESYVSVCRRHYKEAIKAACCS.

ATP-binding positions include 9–16 (SAMNAGKS) and 87–90 (DECQ). Catalysis depends on glutamate 88, which acts as the Proton acceptor. Zn(2+) contacts are provided by cysteine 145, cysteine 147, cysteine 182, and histidine 185.

Belongs to the thymidine kinase family. In terms of assembly, homotetramer.

It localises to the cytoplasm. The enzyme catalyses thymidine + ATP = dTMP + ADP + H(+). The sequence is that of Thymidine kinase from Yersinia pestis.